The following is a 379-amino-acid chain: MTTSTGKINLLGLTLAEMEQFFDSIGEKRFRAGQVMKWIHHFGVDDFAAMTNVGKVLREKLEAVAEIRGPEVVSEDISADGTRKWVVRVASGSCVETVYIPTDDRGTLCVSSQAGCALDCSFCSTGKQGFNSNLTAAEVIGQVWLANKSFGTVPAKIDRAITNVVMMGMGEPLLNFDNVIAAMKIMMEDLGYGISKRRVTLSTSGVVPMIDELAKHIDVSLALSLHAPNDELRNKLVPINKKYPLKMLLESCMGYMSTLGGKRVLTIEYTLLKDVNDQPEHAAQMIELLRDVPCKINLIPFNPFPHSGYERPSNNAIRRFQDLLHHGGFNVTTRTTRGDDIDAACGQLVGQVNDRTRRSERYIAVRQLADEPQDSAARP.

The active-site Proton acceptor is glutamate 96. Residues 102 to 342 (TDDRGTLCVS…TRTTRGDDID (241 aa)) enclose the Radical SAM core domain. Cysteines 109 and 345 form a disulfide. Residues cysteine 116, cysteine 120, and cysteine 123 each coordinate [4Fe-4S] cluster. Residues 170 to 171 (GE), serine 202, 224 to 226 (SLH), and asparagine 302 contribute to the S-adenosyl-L-methionine site. The active-site S-methylcysteine intermediate is cysteine 345.

Belongs to the radical SAM superfamily. RlmN family. [4Fe-4S] cluster serves as cofactor.

It is found in the cytoplasm. The enzyme catalyses adenosine(2503) in 23S rRNA + 2 reduced [2Fe-2S]-[ferredoxin] + 2 S-adenosyl-L-methionine = 2-methyladenosine(2503) in 23S rRNA + 5'-deoxyadenosine + L-methionine + 2 oxidized [2Fe-2S]-[ferredoxin] + S-adenosyl-L-homocysteine. The catalysed reaction is adenosine(37) in tRNA + 2 reduced [2Fe-2S]-[ferredoxin] + 2 S-adenosyl-L-methionine = 2-methyladenosine(37) in tRNA + 5'-deoxyadenosine + L-methionine + 2 oxidized [2Fe-2S]-[ferredoxin] + S-adenosyl-L-homocysteine. In terms of biological role, specifically methylates position 2 of adenine 2503 in 23S rRNA and position 2 of adenine 37 in tRNAs. m2A2503 modification seems to play a crucial role in the proofreading step occurring at the peptidyl transferase center and thus would serve to optimize ribosomal fidelity. The chain is Dual-specificity RNA methyltransferase RlmN from Pseudomonas entomophila (strain L48).